The primary structure comprises 328 residues: D-cysteine desulfhydrase (328 aa).

An N6-(pyridoxal phosphate)lysine modification is found at K51.

This sequence belongs to the ACC deaminase/D-cysteine desulfhydrase family. In terms of assembly, homodimer. It depends on pyridoxal 5'-phosphate as a cofactor.

The enzyme catalyses D-cysteine + H2O = hydrogen sulfide + pyruvate + NH4(+) + H(+). Its function is as follows. Catalyzes the alpha,beta-elimination reaction of D-cysteine and of several D-cysteine derivatives. It could be a defense mechanism against D-cysteine. This is D-cysteine desulfhydrase from Klebsiella pneumoniae (strain 342).